We begin with the raw amino-acid sequence, 123 residues long: Ribosome-binding factor A (123 aa).

It belongs to the RbfA family. In terms of assembly, monomer. Binds 30S ribosomal subunits, but not 50S ribosomal subunits or 70S ribosomes.

Its subcellular location is the cytoplasm. In terms of biological role, one of several proteins that assist in the late maturation steps of the functional core of the 30S ribosomal subunit. Associates with free 30S ribosomal subunits (but not with 30S subunits that are part of 70S ribosomes or polysomes). Required for efficient processing of 16S rRNA. May interact with the 5'-terminal helix region of 16S rRNA. The chain is Ribosome-binding factor A from Variovorax paradoxus (strain S110).